The chain runs to 194 residues: Imidazoleglycerol-phosphate dehydratase (194 aa).

It belongs to the imidazoleglycerol-phosphate dehydratase family.

Its subcellular location is the cytoplasm. The enzyme catalyses D-erythro-1-(imidazol-4-yl)glycerol 3-phosphate = 3-(imidazol-4-yl)-2-oxopropyl phosphate + H2O. It participates in amino-acid biosynthesis; L-histidine biosynthesis; L-histidine from 5-phospho-alpha-D-ribose 1-diphosphate: step 6/9. This Listeria monocytogenes serotype 4b (strain F2365) protein is Imidazoleglycerol-phosphate dehydratase.